The following is a 310-amino-acid chain: Ribosomal RNA small subunit methyltransferase H (310 aa).

Residues 32-34 (GGH), Asp52, Phe79, Asp100, and Gln107 contribute to the S-adenosyl-L-methionine site.

It belongs to the methyltransferase superfamily. RsmH family.

The protein resides in the cytoplasm. It catalyses the reaction cytidine(1402) in 16S rRNA + S-adenosyl-L-methionine = N(4)-methylcytidine(1402) in 16S rRNA + S-adenosyl-L-homocysteine + H(+). Functionally, specifically methylates the N4 position of cytidine in position 1402 (C1402) of 16S rRNA. In Bacillus mycoides (strain KBAB4) (Bacillus weihenstephanensis), this protein is Ribosomal RNA small subunit methyltransferase H.